Consider the following 555-residue polypeptide: Beta-hexosaminidase A (555 aa).

The first 18 residues, 1–18 (MRLLIPILIFALITTAVT), serve as a signal peptide directing secretion. A glycan (N-linked (GlcNAc...) asparagine) is linked at Asn47. Catalysis depends on Glu325, which acts as the Proton donor. N-linked (GlcNAc...) asparagine glycosylation is found at Asn351, Asn412, and Asn460.

This sequence belongs to the glycosyl hydrolase 20 family. As to expression, expressed in coelomocytes and neurons of the pharyngeal region and nerve cord.

The protein localises to the lysosome. The catalysed reaction is Hydrolysis of terminal non-reducing N-acetyl-D-hexosamine residues in N-acetyl-beta-D-hexosaminides.. Its function is as follows. Responsible for the degradation of GM2 gangliosides, and a variety of other molecules containing terminal N-acetyl hexosamines. Degrades chitotriose. This Caenorhabditis elegans protein is Beta-hexosaminidase A (hex-1).